Here is a 414-residue protein sequence, read N- to C-terminus: Clusterin-associated protein 1 (414 aa).

Positions 198–291 form a coiled coil; sequence KTKDLLNNVA…ERFEEAKNTL (94 aa). Residues 305–414 form a disordered region; sequence LLKSGSNDDS…EPLDESDNDF (110 aa). Acidic residues-rich tracts occupy residues 312–328 and 360–389; these read DDSD…DSEL and DSDD…EDES. Phosphoserine is present on residues Ser314, Ser324, and Ser326. Position 410 is a phosphoserine (Ser410).

The protein belongs to the CLUAP1 family. Interacts with CLU/clusterin. Interacts with UBXN10; the interaction is direct.

Its subcellular location is the cell projection. It localises to the cilium. It is found in the nucleus. Its function is as follows. Required for cilia biogenesis. Appears to function within the multiple intraflagellar transport complex B (IFT-B). Key regulator of hedgehog signaling. This is Clusterin-associated protein 1 (CLUAP1) from Macaca fascicularis (Crab-eating macaque).